The chain runs to 511 residues: 2-isopropylmalate synthase (511 aa).

The Pyruvate carboxyltransferase domain occupies 5–267; the sequence is IQIFDTTLRD…QTQINLEETK (263 aa). 4 residues coordinate Mn(2+): Asp-14, His-202, His-204, and Asn-238. Residues 391–511 are regulatory domain; it reads KVETLQLQFV…NTKVEEGIHS (121 aa).

The protein belongs to the alpha-IPM synthase/homocitrate synthase family. LeuA type 1 subfamily. Homodimer. Requires Mn(2+) as cofactor.

The protein resides in the cytoplasm. The catalysed reaction is 3-methyl-2-oxobutanoate + acetyl-CoA + H2O = (2S)-2-isopropylmalate + CoA + H(+). It participates in amino-acid biosynthesis; L-leucine biosynthesis; L-leucine from 3-methyl-2-oxobutanoate: step 1/4. Its function is as follows. Catalyzes the condensation of the acetyl group of acetyl-CoA with 3-methyl-2-oxobutanoate (2-ketoisovalerate) to form 3-carboxy-3-hydroxy-4-methylpentanoate (2-isopropylmalate). The chain is 2-isopropylmalate synthase from Staphylococcus saprophyticus subsp. saprophyticus (strain ATCC 15305 / DSM 20229 / NCIMB 8711 / NCTC 7292 / S-41).